A 624-amino-acid chain; its full sequence is Actin-related protein 8 (624 aa).

N-acetylmethionine is present on Met-1. The segment covering 1–25 (MTQAEKGDAENGKEKGGEKEKEQRG) has biased composition (basic and acidic residues). A disordered region spans residues 1-29 (MTQAEKGDAENGKEKGGEKEKEQRGVKRP). The ATP site is built by Ser-55 and Thr-56. Ser-132 carries the post-translational modification Phosphoserine. 283–286 (DVGD) is an ATP binding site. Ser-412 is modified (phosphoserine). The disordered stretch occupies residues 430-460 (SKQEQSAKATADRKSASKPIGFEGDLRGQSS).

This sequence belongs to the actin family. ARP8 subfamily. In terms of assembly, component of the chromatin remodeling INO80 complex; specifically part of a complex module associated with the DBINO domain of INO80. Exists as monomers and dimers, but the dimer is most probably the biologically relevant form required for stable interactions with histones that exploits the twofold symmetry of the nucleosome core.

The protein resides in the nucleus. It is found in the chromosome. Functionally, plays an important role in the functional organization of mitotic chromosomes. Exhibits low basal ATPase activity, and unable to polymerize. Proposed core component of the chromatin remodeling INO80 complex which is involved in transcriptional regulation, DNA replication and probably DNA repair. Required for the recruitment of INO80 (and probably the INO80 complex) to sites of DNA damage Strongly prefer nucleosomes and H3-H4 tetramers over H2A-H2B dimers, suggesting it may act as a nucleosome recognition module within the complex. The sequence is that of Actin-related protein 8 (ACTR8) from Ailuropoda melanoleuca (Giant panda).